Here is a 217-residue protein sequence, read N- to C-terminus: MSWRYALKNYVTSPETVNDDTVTYFDDKVSIIRDSFPKSECHLLILPRTMQLSRSHPTKVIDAKFKNEFESYVNSAIDHIFRHFQEKFRIKKSDDDKDPCWDDILKDKNKFVRNFVQVGIHSVPSMANLHIHVISKDFHSVRLKNKKHYNSFNTGFFISWDDLPLNGKNLGTDKEIETTYLKEHDLLCCYCQRNFSNKFSLLKKHLELEFNSHFELK.

Positions 6–139 (ALKNYVTSPE…HIHVISKDFH (134 aa)) constitute an HIT domain. Interaction with DNA regions lie at residues 34–38 (DSFPK), 121–132 (HSVPSMANLHIH), and 144–148 (KNKKH). Histidine 130 acts as the Nucleophile in catalysis. Residues cysteine 188, cysteine 191, histidine 205, and glutamate 209 each contribute to the Zn(2+) site.

The protein localises to the nucleus. It is found in the cytoplasm. It carries out the reaction a 5'-end adenosine-5'-diphospho-5'-2'-deoxyribonucleoside-DNA + H2O = a 5'-end 5'-phospho-2'-deoxyribonucleoside-DNA + AMP + 2 H(+). The catalysed reaction is a 5'-end adenosine-5'-diphospho-5'-ribonucleoside-2'-deoxyribonucleotide-DNA + H2O = a 5'-end 5'-phospho-ribonucleoside-2'-deoxyribonucleotide-DNA + AMP + 2 H(+). It catalyses the reaction a 3'-end 2'-deoxyribonucleotide-3'-diphospho-5'-guanosine-DNA + H2O = a 3'-end 2'-deoxyribonucleotide 3'-phosphate-DNA + GMP + 2 H(+). Functionally, DNA-binding protein involved in single-strand DNA break repair, double-strand DNA break repair and base excision repair. Resolves abortive DNA ligation intermediates formed either at base excision sites, or when DNA ligases attempt to repair non-ligatable breaks induced by reactive oxygen species. Catalyzes the release of adenylate groups covalently linked to 5'-phosphate termini, resulting in the production of 5'-phosphate termini that can be efficiently rejoined. Likewise, catalyzes the release of 3'-linked guanosine (DNAppG) and inosine (DNAppI) from DNA, but has higher specific activity with 5'-linked adenosine (AppDNA). The polypeptide is Aprataxin-like protein (HNT3) (Saccharomyces cerevisiae (strain ATCC 204508 / S288c) (Baker's yeast)).